A 247-amino-acid chain; its full sequence is Probable chemoreceptor glutamine deamidase CheD (247 aa).

The disordered stretch occupies residues 204-247; the sequence is KRPAAPQPARPRIELFGGRGTTPGAGSQAAGSPYAANLSRKQEA.

This sequence belongs to the CheD family.

It catalyses the reaction L-glutaminyl-[protein] + H2O = L-glutamyl-[protein] + NH4(+). Functionally, probably deamidates glutamine residues to glutamate on methyl-accepting chemotaxis receptors (MCPs), playing an important role in chemotaxis. This chain is Probable chemoreceptor glutamine deamidase CheD, found in Burkholderia orbicola (strain MC0-3).